The following is a 483-amino-acid chain: Serralysin (483 aa).

Histidine 184 is a Zn(2+) binding site. Glutamate 185 is an active-site residue. 2 residues coordinate Zn(2+): histidine 188 and histidine 194. Residues arginine 263, aspartate 266, aspartate 295, glycine 297, glycine 298, aspartate 300, threonine 337, and glutamate 339 each contribute to the Ca(2+) site. 2 Hemolysin-type calcium-binding repeats span residues 342-359 and 360-377; these read IGGS…ENIL and KGGA…ADQL.

This sequence belongs to the peptidase M10B family. It depends on Zn(2+) as a cofactor. The cofactor is Ca(2+).

It localises to the secreted. It carries out the reaction Preferential cleavage of bonds with hydrophobic residues in P1'.. Its activity is regulated as follows. Inhibited by 8 mM 1,10-phenanthroline and 10 mM EDTA, but not by PMSF. Its function is as follows. Involved in the inhibition of insect antibacterial peptides. Reduces the antibacterial activity of G.mellonella hemolymph by 50%. Reduces the antibacterial activity of cecropin A by 80% and cecropin B by 75%. This chain is Serralysin, found in Photorhabdus sp. (strain Az29).